The chain runs to 186 residues: Elongation factor P (186 aa).

N6-(3,6-diaminohexanoyl)-5-hydroxylysine is present on Lys33.

Belongs to the elongation factor P family. May be beta-lysylated on the epsilon-amino group of Lys-33 by the combined action of EpmA and EpmB, and then hydroxylated on the C5 position of the same residue by EpmC (if this protein is present). Lysylation is critical for the stimulatory effect of EF-P on peptide-bond formation. The lysylation moiety may extend toward the peptidyltransferase center and stabilize the terminal 3-CCA end of the tRNA. Hydroxylation of the C5 position on Lys-33 may allow additional potential stabilizing hydrogen-bond interactions with the P-tRNA.

The protein resides in the cytoplasm. It functions in the pathway protein biosynthesis; polypeptide chain elongation. Involved in peptide bond synthesis. Alleviates ribosome stalling that occurs when 3 or more consecutive Pro residues or the sequence PPG is present in a protein, possibly by augmenting the peptidyl transferase activity of the ribosome. Modification of Lys-33 is required for alleviation. This chain is Elongation factor P, found in Acidithiobacillus ferrooxidans (strain ATCC 23270 / DSM 14882 / CIP 104768 / NCIMB 8455) (Ferrobacillus ferrooxidans (strain ATCC 23270)).